Consider the following 80-residue polypeptide: Large ribosomal subunit protein bL31B (80 aa).

This sequence belongs to the bacterial ribosomal protein bL31 family. Type B subfamily. Part of the 50S ribosomal subunit.

The polypeptide is Large ribosomal subunit protein bL31B (Xylella fastidiosa (strain M23)).